The primary structure comprises 397 residues: Serpin B10 (397 aa).

The short motif at 74 to 77 is the Nuclear localization signal element; that stretch reads KKRK.

The protein belongs to the serpin family. Ov-serpin subfamily.

The protein resides in the nucleus. It is found in the cytoplasm. In terms of biological role, protease inhibitor that may play a role in the regulation of protease activities during hematopoiesis and apoptosis induced by TNF. May regulate protease activities in the cytoplasm and in the nucleus. In Rhinolophus ferrumequinum (Greater horseshoe bat), this protein is Serpin B10 (SERPINB10).